The sequence spans 113 residues: U11-theraphotoxin-Hhn1a (113 aa).

The N-terminal stretch at 1–21 (MNTVRVAFLLVFVLAVSLGQA) is a signal peptide. Residues 22 to 74 (DKDENRMEMQEKTEQGKSYLDFAENLLLQKLEEPEAKLLEEDSEESRNSRQKR) constitute a propeptide that is removed on maturation. The span at 58 to 69 (KLLEEDSEESRN) shows a compositional bias: basic and acidic residues. A disordered region spans residues 58–83 (KLLEEDSEESRNSRQKRCIGEGVPCD). 3 cysteine pairs are disulfide-bonded: C75–C90, C82–C95, and C89–C110.

The protein belongs to the neurotoxin 14 (magi-1) family. 01 (HNTX-16) subfamily. In terms of tissue distribution, expressed by the venom gland.

It localises to the secreted. In terms of biological role, probable ion channel inhibitor. The chain is U11-theraphotoxin-Hhn1a from Cyriopagopus hainanus (Chinese bird spider).